The following is a 357-amino-acid chain: Sulfate/thiosulfate import ATP-binding protein CysA (357 aa).

Residues Ile-3 to Leu-237 enclose the ABC transporter domain. Gly-35–Thr-42 is a binding site for ATP.

Belongs to the ABC transporter superfamily. Sulfate/tungstate importer (TC 3.A.1.6) family. The complex is composed of two ATP-binding proteins (CysA), two transmembrane proteins (CysT and CysW) and a solute-binding protein (CysP).

The protein localises to the cell inner membrane. It catalyses the reaction sulfate(out) + ATP + H2O = sulfate(in) + ADP + phosphate + H(+). The catalysed reaction is thiosulfate(out) + ATP + H2O = thiosulfate(in) + ADP + phosphate + H(+). Functionally, part of the ABC transporter complex CysAWTP involved in sulfate/thiosulfate import. Responsible for energy coupling to the transport system. The chain is Sulfate/thiosulfate import ATP-binding protein CysA from Neisseria meningitidis serogroup B (strain ATCC BAA-335 / MC58).